An 85-amino-acid chain; its full sequence is U4-theraphotoxin-Hhn1l (85 aa).

Positions 1–22 are cleaved as a signal peptide; the sequence is MKVTLIAFLTCAAVLVLHTTAA. A propeptide spanning residues 23-48 is cleaved from the precursor; that stretch reads EELEAESQLMGVGMPDTELAAVDEER. 3 cysteine pairs are disulfide-bonded: cysteine 52–cysteine 66, cysteine 56–cysteine 77, and cysteine 71–cysteine 82.

The protein belongs to the neurotoxin 12 (Hwtx-2) family. 02 (Hwtx-2) subfamily. In terms of tissue distribution, expressed by the venom gland.

It is found in the secreted. Its function is as follows. Postsynaptic neurotoxin. The sequence is that of U4-theraphotoxin-Hhn1l from Cyriopagopus hainanus (Chinese bird spider).